The chain runs to 303 residues: ATP synthase gamma chain (303 aa).

The protein belongs to the ATPase gamma chain family. F-type ATPases have 2 components, CF(1) - the catalytic core - and CF(0) - the membrane proton channel. CF(1) has five subunits: alpha(3), beta(3), gamma(1), delta(1), epsilon(1). CF(0) has three main subunits: a, b and c.

It localises to the cell inner membrane. Functionally, produces ATP from ADP in the presence of a proton gradient across the membrane. The gamma chain is believed to be important in regulating ATPase activity and the flow of protons through the CF(0) complex. The chain is ATP synthase gamma chain from Bartonella henselae (strain ATCC 49882 / DSM 28221 / CCUG 30454 / Houston 1) (Rochalimaea henselae).